Reading from the N-terminus, the 190-residue chain is RNA-binding protein OPG065 (190 aa).

The Z-binding domain occupies 5-70 (YIDERSNAEI…DIPPRWFMTT (66 aa)). One can recognise a DRBM domain in the interval 117–184 (NPVTVINEYC…AKLAVDKLLG (68 aa)).

The protein belongs to the orthopoxvirus OPG065 family. In terms of assembly, interacts with host G1P2/ISG15. Interacts with host EIF2AK2/PKR. Interacts with host ZBP1.

RNA-binding protein that plays a role in the inhibition of multiple cellular antiviral responses activated by double-stranded RNA (dsRNA), such as inhibition of PKR activation, necroptosis, and IFN-mediated antiviral activities. Recognizes and binds Z-RNA structures via its Z-binding domain and dsRNA via its DRBM domain: RNA-binding activity is required to escape host ZBP1-dependent necroptosis. Mechanistically, the Z-binding domain binds Z-RNAs that are produced during vaccinia virus infection, thereby competing with Z-RNA detection by host ZBP1, suppressing ZBP1-dependent necroptosis. Acts as a key inhibitor of the interferon response by blocking the phosphorylation and subsequent activation of IRF3 and IRF7 kinases that are required for interferon-alpha gene expression. Inhibits NF-kappa-B activation and the ubiquitin-like protein ISG15, which is an early antiviral protein. The binding with host ISG15 subsequently blocks host ISGylation. The polypeptide is RNA-binding protein OPG065 (OPG065) (Vaccinia virus (strain Western Reserve) (VACV)).